The following is a 453-amino-acid chain: MSQQQPTVGIVSLGCPKATVDSERILTQLKAEGYHLTNSYEEADAVIVNTCGFIDSAVQESLDTIGEALDENGRVIVTGCLGAKDGVIEKVHPSVLAVSGPAAYEEVLTAVHEAIAPPKHDPFVDLVPPQGIKLTPKHFAYLKISEGCNHRCTFCIIPSMRGNLVSRPVSDVVAEARRLKEAGVKELLVVSQDTAAYGVDVKYKTEFADGRPTKTSMFGLAEALSELGIWVRLHYVYPYPNVEDVIPLMAEGKLLPYLDMPLQHADPDILKAMKRPGNVDKTLERIKKWREQVPDLTIRSTFIVGFPGETEAQFQNLLDFIEEAQLDRVGCFQYSPVEGAVANDLAEPVPDEVKQERFDRFMQLQQQISANKMQAKIGKTIQVLVDEVDEEGAIARSKADAPEIDGMVFIPEGHHLNPGDFVEVEVFAADEYDLWATPVGEFVPQETSYVELG.

Residues 6-116 (PTVGIVSLGC…VLTAVHEAIA (111 aa)) enclose the MTTase N-terminal domain. [4Fe-4S] cluster contacts are provided by Cys15, Cys51, Cys80, Cys148, Cys152, and Cys155. The region spanning 134-371 (LTPKHFAYLK…MQLQQQISAN (238 aa)) is the Radical SAM core domain. One can recognise a TRAM domain in the interval 374–440 (QAKIGKTIQV…EYDLWATPVG (67 aa)).

It belongs to the methylthiotransferase family. RimO subfamily. [4Fe-4S] cluster is required as a cofactor.

The protein resides in the cytoplasm. It catalyses the reaction L-aspartate(89)-[ribosomal protein uS12]-hydrogen + (sulfur carrier)-SH + AH2 + 2 S-adenosyl-L-methionine = 3-methylsulfanyl-L-aspartate(89)-[ribosomal protein uS12]-hydrogen + (sulfur carrier)-H + 5'-deoxyadenosine + L-methionine + A + S-adenosyl-L-homocysteine + 2 H(+). Functionally, catalyzes the methylthiolation of an aspartic acid residue of ribosomal protein uS12. The sequence is that of Ribosomal protein uS12 methylthiotransferase RimO from Hydrogenovibrio crunogenus (strain DSM 25203 / XCL-2) (Thiomicrospira crunogena).